We begin with the raw amino-acid sequence, 382 residues long: Mannosyl phosphorylinositol ceramide synthase SUR1 (382 aa).

Residues 1 to 6 (MRKELK) lie on the Cytoplasmic side of the membrane. A helical transmembrane segment spans residues 7 to 27 (YLICFNILLLLSIIYYTFDLL). At 28 to 269 (TLCIDDTVKD…KALENHILSC (242 aa)) the chain is on the extracellular side. The helical transmembrane segment at 270–290 (VVTGFIFGFFILYGEFTFYCW) threads the bilayer. The Cytoplasmic portion of the chain corresponds to 291 to 382 (LCSKNFSNLT…SKYSLGNNSS (92 aa)). At Ser349 the chain carries Phosphoserine.

This sequence belongs to the glycosyltransferase 32 family. Heterodimer of SUR1 and CSG2.

The protein resides in the membrane. The enzyme catalyses a 1D-myo-inositol-1-phospho-N-[(R)-2-hydroxy-very-long-chain fatty acyl]-(R)-4-hydroxysphingoid base + GDP-alpha-D-mannose = an alpha-D-mannosyl-(1&lt;-&gt;6)-1D-myo-inositol-1-phospho-N-[(R)-2-hydroxy-very-long-chain fatty acyl]-(R)-4-hydroxysphingoid base + GDP + H(+). In terms of biological role, involved in the synthesis of mannosyl phosphorylinositol ceramide. Catalyzes the addition of mannosyl to phosphorylinositol ceramide. Suppressor of RVS161 mutation. The polypeptide is Mannosyl phosphorylinositol ceramide synthase SUR1 (Saccharomyces cerevisiae (strain ATCC 204508 / S288c) (Baker's yeast)).